A 216-amino-acid chain; its full sequence is Dimethylamine corrinoid protein 1 (216 aa).

The B12-binding N-terminal domain occupies 1-91 (MTSKEELLQE…DMPAGTETKK (91 aa)). Positions 92-216 (LGVIVNGTVE…AKAKELLVGK (125 aa)) constitute a B12-binding domain. A methylcob(III)alamin-binding site is contributed by H105.

It belongs to the methylamine corrinoid protein family.

It functions in the pathway one-carbon metabolism; methanogenesis from dimethylamine. Functionally, acts as a methyl group carrier between MtbB and MtbA. This is Dimethylamine corrinoid protein 1 (mtbC1) from Methanosarcina mazei (strain ATCC BAA-159 / DSM 3647 / Goe1 / Go1 / JCM 11833 / OCM 88) (Methanosarcina frisia).